A 247-amino-acid chain; its full sequence is Probable phosphatase swp_1620 (247 aa).

Zn(2+) is bound by residues histidine 8, histidine 10, histidine 16, histidine 41, glutamate 74, histidine 102, histidine 132, aspartate 193, and histidine 195.

It belongs to the PHP family. Zn(2+) is required as a cofactor.

This chain is Probable phosphatase swp_1620, found in Shewanella piezotolerans (strain WP3 / JCM 13877).